The primary structure comprises 195 residues: uncharacterized protein (195 aa).

The next 4 membrane-spanning stretches (helical) occupy residues 89 to 106 (SWIS…PLLP), 111 to 128 (HLPL…VWKR), 149 to 168 (VKIS…VLLL), and 172 to 194 (LNAL…FLNI).

It is found in the cell membrane. This is an uncharacterized protein from Bacillus subtilis (strain 168).